Here is a 912-residue protein sequence, read N- to C-terminus: Transcription factor bHLH140 (912 aa).

The disordered stretch occupies residues 1–57 (MDDFNLRSENPNSSSTTSSSSSSFHRHKSETGNTKRSRSTSTLSTDPQSVAARDRRH). Positions 13–23 (SSSTTSSSSSS) are enriched in low complexity. The region spanning 43-92 (LSTDPQSVAARDRRHRISDRFKILQSMVPGGAKMDTVSMLDEAISYVKFL) is the bHLH domain. 234 to 241 (GPPGSGKS) is a binding site for ATP. The region spanning 511-690 (KAKASQKNID…KYKGSQDKAV (180 aa)) is the Macro domain. The span at 657–666 (PKRSSQTAVS) shows a compositional bias: polar residues. The interval 657-706 (PKRSSQTAVSDSGEDIKEDSERNKKYKGSQDKAVTNNLESESLEDTRGSG) is disordered. Positions 720 to 829 (LHSIAMHPER…SQDFNSDSLK (110 aa)) constitute an HIT domain. A C2H2-type zinc finger spans residues 870–893 (LRCNRCRSAHPNIPKLKSHVRSCH).

As to quaternary structure, homodimer.

The protein resides in the nucleus. This is Transcription factor bHLH140 (BHLH140) from Arabidopsis thaliana (Mouse-ear cress).